The primary structure comprises 212 residues: Imidazole glycerol phosphate synthase subunit HisH (212 aa).

Positions 3–212 (SIAVVDYGMG…LLSNFLKWTP (210 aa)) constitute a Glutamine amidotransferase type-1 domain. Cys82 acts as the Nucleophile in catalysis. Catalysis depends on residues His192 and Glu194.

In terms of assembly, heterodimer of HisH and HisF.

Its subcellular location is the cytoplasm. It catalyses the reaction 5-[(5-phospho-1-deoxy-D-ribulos-1-ylimino)methylamino]-1-(5-phospho-beta-D-ribosyl)imidazole-4-carboxamide + L-glutamine = D-erythro-1-(imidazol-4-yl)glycerol 3-phosphate + 5-amino-1-(5-phospho-beta-D-ribosyl)imidazole-4-carboxamide + L-glutamate + H(+). It carries out the reaction L-glutamine + H2O = L-glutamate + NH4(+). The protein operates within amino-acid biosynthesis; L-histidine biosynthesis; L-histidine from 5-phospho-alpha-D-ribose 1-diphosphate: step 5/9. Its function is as follows. IGPS catalyzes the conversion of PRFAR and glutamine to IGP, AICAR and glutamate. The HisH subunit catalyzes the hydrolysis of glutamine to glutamate and ammonia as part of the synthesis of IGP and AICAR. The resulting ammonia molecule is channeled to the active site of HisF. This Nitrosomonas europaea (strain ATCC 19718 / CIP 103999 / KCTC 2705 / NBRC 14298) protein is Imidazole glycerol phosphate synthase subunit HisH.